A 1269-amino-acid chain; its full sequence is Protein CFT1 (1269 aa).

Residues 393-427 are disordered; that stretch reads PESQPEETLDDGNESDDDLYGGDTAQTEDTTNRPL. Residues 395–412 show a composition bias toward acidic residues; sequence SQPEETLDDGNESDDDLY. Positions 416-425 are enriched in polar residues; that stretch reads TAQTEDTTNR.

It belongs to the CFT1 family.

It is found in the nucleus. Functionally, RNA-binding component of the cleavage and polyadenylation factor (CPF) complex, which plays a key role in polyadenylation-dependent pre-mRNA 3'-end formation and cooperates with cleavage factors including the CFIA complex and NAB4/CFIB. Involved in poly(A) site recognition. May be involved in coupling transcription termination and mRNA 3'-end formation. This chain is Protein CFT1 (CFT1), found in Yarrowia lipolytica (strain CLIB 122 / E 150) (Yeast).